The chain runs to 55 residues: Large ribosomal subunit protein bL33A (55 aa).

It belongs to the bacterial ribosomal protein bL33 family.

This is Large ribosomal subunit protein bL33A from Mycolicibacterium vanbaalenii (strain DSM 7251 / JCM 13017 / BCRC 16820 / KCTC 9966 / NRRL B-24157 / PYR-1) (Mycobacterium vanbaalenii).